Here is a 492-residue protein sequence, read N- to C-terminus: Xaa-Pro dipeptidase (492 aa).

The residue at position 2 (Ala2) is an N-acetylalanine. Ser167 is modified (phosphoserine). His255 serves as a coordination point for a dipeptide. Positions 276, 287, and 370 each coordinate Mn(2+). Residue Asp287 participates in a dipeptide binding. Residues His377 and Arg398 each contribute to the a dipeptide site. Residues Glu412 and Glu452 each contribute to the Mn(2+) site.

This sequence belongs to the peptidase M24B family. Eukaryotic-type prolidase subfamily. As to quaternary structure, homodimer. Mn(2+) is required as a cofactor.

It catalyses the reaction Xaa-L-Pro dipeptide + H2O = an L-alpha-amino acid + L-proline. Dipeptidase that catalyzes the hydrolysis of dipeptides with a prolyl (Xaa-Pro) or hydroxyprolyl residue in the C-terminal position. The preferred dipeptide substrate is Gly-Pro, but other Xaa-Pro dipeptides, such as Ala-Pro, Met-Pro, Phe-Pro, Val-Pro and Leu-Pro, can be cleaved. Plays an important role in collagen metabolism because the high level of iminoacids in collagen. The chain is Xaa-Pro dipeptidase (Pepd) from Rattus norvegicus (Rat).